The primary structure comprises 127 residues: Small ribosomal subunit protein uS11 (127 aa).

It belongs to the universal ribosomal protein uS11 family. As to quaternary structure, part of the 30S ribosomal subunit. Interacts with proteins S7 and S18. Binds to IF-3.

Functionally, located on the platform of the 30S subunit, it bridges several disparate RNA helices of the 16S rRNA. Forms part of the Shine-Dalgarno cleft in the 70S ribosome. The chain is Small ribosomal subunit protein uS11 from Chlorobium phaeobacteroides (strain DSM 266 / SMG 266 / 2430).